The following is a 778-amino-acid chain: Phenylalanine--tRNA ligase beta subunit (778 aa).

The 112-residue stretch at 39–150 (YEVPQKIVFG…GKYKIGEEVS (112 aa)) folds into the tRNA-binding domain. The 77-residue stretch at 391-467 (HEDKIISLNK…RLVGIDNIPS (77 aa)) folds into the B5 domain. Residues Asp445, Asp451, Glu454, and Glu455 each coordinate Mg(2+). Positions 686-778 (SKYQASFRDL…LKNQLGVGIR (93 aa)) constitute an FDX-ACB domain.

This sequence belongs to the phenylalanyl-tRNA synthetase beta subunit family. Type 1 subfamily. As to quaternary structure, tetramer of two alpha and two beta subunits. Mg(2+) serves as cofactor.

It is found in the cytoplasm. It carries out the reaction tRNA(Phe) + L-phenylalanine + ATP = L-phenylalanyl-tRNA(Phe) + AMP + diphosphate + H(+). The sequence is that of Phenylalanine--tRNA ligase beta subunit from Sulfurimonas denitrificans (strain ATCC 33889 / DSM 1251) (Thiomicrospira denitrificans (strain ATCC 33889 / DSM 1251)).